The sequence spans 276 residues: Urease accessory protein UreD (276 aa).

The protein belongs to the UreD family. As to quaternary structure, ureD, UreF and UreG form a complex that acts as a GTP-hydrolysis-dependent molecular chaperone, activating the urease apoprotein by helping to assemble the nickel containing metallocenter of UreC. The UreE protein probably delivers the nickel.

The protein resides in the cytoplasm. Required for maturation of urease via the functional incorporation of the urease nickel metallocenter. This Polaromonas sp. (strain JS666 / ATCC BAA-500) protein is Urease accessory protein UreD.